The chain runs to 374 residues: 5-hydroxytryptamine receptor 1D (374 aa).

N-linked (GlcNAc...) asparagine glycosylation is found at Asn-5, Asn-17, and Asn-21. The next 3 membrane-spanning stretches (helical) occupy residues 36–61 (ISLV…TTIL), 73–94 (LIGS…ISIA), and 107–131 (LCDI…VIAL). Cys-108 and Cys-185 are joined by a disulfide. Residues Asp-115 and Cys-119 each coordinate serotonin. The DRY motif; important for ligand-induced conformation changes motif lies at 132–134 (DRY). Transmembrane regions (helical) follow at residues 152 to 173 (AAAM…PLFW), 192 to 215 (ISYT…ILYG), 298 to 323 (KTLG…VLPI), and 333 to 356 (ALFD…YTVF). Ser-318 is a binding site for serotonin. An NPxxY motif; important for ligand-induced conformation changes and signaling motif is present at residues 349–353 (NPVIY).

Belongs to the G-protein coupled receptor 1 family. In terms of assembly, homodimer. Heterodimer with HTR1B. In terms of tissue distribution, detected in dorsal raphe.

The protein resides in the cell membrane. In terms of biological role, G-protein coupled receptor for 5-hydroxytryptamine (serotonin). Also functions as a receptor for ergot alkaloid derivatives, various anxiolytic and antidepressant drugs and other psychoactive substances. Ligand binding causes a conformation change that triggers signaling via guanine nucleotide-binding proteins (G proteins) and modulates the activity of downstream effectors, such as adenylate cyclase. HTR1D is coupled to G(i)/G(o) G alpha proteins and mediates inhibitory neurotransmission by inhibiting adenylate cyclase activity. Regulates the release of 5-hydroxytryptamine in the brain, and thereby affects neural activity. May also play a role in regulating the release of other neurotransmitters. May play a role in vasoconstriction. In Rattus norvegicus (Rat), this protein is 5-hydroxytryptamine receptor 1D (Htr1d).